Here is a 174-residue protein sequence, read N- to C-terminus: Gamma-crystallin E (174 aa).

Beta/gamma crystallin 'Greek key' domains follow at residues 2–40 and 41–83; these read GKIT…RVDS and GCWM…RLIP. Residues 84–87 form a connecting peptide region; that stretch reads HSSS. 2 Beta/gamma crystallin 'Greek key' domains span residues 88–128 and 129–171; these read HRIR…HVME and GYWV…RRIM.

It belongs to the beta/gamma-crystallin family. As to expression, detected in the superior olivary complex and fibers of the ventral aoustic stria of the auditory hindbrain.

In terms of biological role, crystallins are the dominant structural components of the vertebrate eye lens. The protein is Gamma-crystallin E (Cryge) of Rattus norvegicus (Rat).